Here is a 223-residue protein sequence, read N- to C-terminus: Deoxyribose-phosphate aldolase (223 aa).

Asp89 (proton donor/acceptor) is an active-site residue. Lys154 (schiff-base intermediate with acetaldehyde) is an active-site residue. The active-site Proton donor/acceptor is the Lys183.

Belongs to the DeoC/FbaB aldolase family. DeoC type 1 subfamily.

The protein resides in the cytoplasm. The catalysed reaction is 2-deoxy-D-ribose 5-phosphate = D-glyceraldehyde 3-phosphate + acetaldehyde. It participates in carbohydrate degradation; 2-deoxy-D-ribose 1-phosphate degradation; D-glyceraldehyde 3-phosphate and acetaldehyde from 2-deoxy-alpha-D-ribose 1-phosphate: step 2/2. Its function is as follows. Catalyzes a reversible aldol reaction between acetaldehyde and D-glyceraldehyde 3-phosphate to generate 2-deoxy-D-ribose 5-phosphate. The sequence is that of Deoxyribose-phosphate aldolase from Thermoanaerobacter sp. (strain X514).